A 998-amino-acid polypeptide reads, in one-letter code: Protein Smaug (998 aa).

Polar residues predominate over residues 1-37; that stretch reads MKYATGTDNAMTSGISGQTNSSNSASNEMQPTTSTPT. 3 disordered regions span residues 1 to 45, 50 to 69, and 329 to 370; these read MKYA…EATS, TATYANGNPNPSANPSQSQP, and LCPA…GSSS. The span at 329-338 shows a compositional bias: low complexity; it reads LCPASGSRSS. Phosphoserine is present on residues S564 and S575. Residues 583–763 are interaction with cup; it reads EFKPNYIKFH…KDLKFKLSKM (181 aa). One can recognise an SAM domain in the interval 600 to 654; sequence GIGLWLKSLRLHKYIELFKNMTYEEMLLITEDFLQSVGVTKGASHKLALCIDKLK. Disordered stretches follow at residues 773 to 892 and 943 to 977; these read HVKP…MQQM and NGSNDNLGLERNQQPQQQQQRKLSGGVSSAEQQPK. 2 stretches are compositionally biased toward polar residues: residues 801–822 and 854–864; these read KSGSNDRINNRKNSNDMLNFSL and HQPQYKSSSYP. The residue at position 971 (S971) is a Phosphoserine.

Belongs to the SMAUG family. In terms of assembly, interacts with oskar (osk). Binds to the 3'-UTR of nos. Interacts with cup, which in turn recruits eIF4-E, leading to an indirect interaction between smg and eIF4-E that prevents mRNA translation.

The protein localises to the cytoplasm. Functionally, translation regulator that binds to the 3'-UTR of specific mRNAs such as nanos (nos) and prevent their translation. Prevents translation of unlocalized nos in the bulk cytoplasm via the recruitment of cup. The sequence is that of Protein Smaug from Drosophila sechellia (Fruit fly).